A 345-amino-acid polypeptide reads, in one-letter code: L-threonine 3-dehydrogenase (345 aa).

C42 contributes to the Zn(2+) binding site. Active-site charge relay system residues include T44 and H47. H67, E68, C97, C100, C103, and C111 together coordinate Zn(2+). NAD(+)-binding positions include I179, D199, R204, 266–268, and 290–291; these read LGI and IY.

The protein belongs to the zinc-containing alcohol dehydrogenase family. In terms of assembly, homotetramer. Zn(2+) is required as a cofactor.

The protein resides in the cytoplasm. It catalyses the reaction L-threonine + NAD(+) = (2S)-2-amino-3-oxobutanoate + NADH + H(+). Its pathway is amino-acid degradation; L-threonine degradation via oxydo-reductase pathway; glycine from L-threonine: step 1/2. In terms of biological role, catalyzes the NAD(+)-dependent oxidation of L-threonine to 2-amino-3-ketobutyrate. The chain is L-threonine 3-dehydrogenase from Rhizobium johnstonii (strain DSM 114642 / LMG 32736 / 3841) (Rhizobium leguminosarum bv. viciae).